The following is a 685-amino-acid chain: Hemocyanin subunit X (685 aa).

An N-terminal signal peptide occupies residues 1–20 (MKYCTESLILILAVIGCISA). 3 residues coordinate Cu cation: histidine 210, histidine 214, and histidine 243. N-linked (GlcNAc...) asparagine glycosylation is present at asparagine 329. Cu cation-binding residues include histidine 367, histidine 371, and histidine 407. Cysteine 577 and cysteine 625 are disulfide-bonded.

Belongs to the tyrosinase family. Hemocyanin subfamily.

Its subcellular location is the secreted. The protein localises to the extracellular space. Its function is as follows. Hemocyanins are copper-containing oxygen carriers occurring freely dissolved in the hemolymph of many mollusks and arthropods. This chain is Hemocyanin subunit X (HCX), found in Scutigera coleoptrata (House centipede).